Reading from the N-terminus, the 128-residue chain is Small ribosomal subunit protein uS9 (128 aa).

Belongs to the universal ribosomal protein uS9 family. Part of the 30S ribosomal subunit. Contacts proteins S7 and S10.

Functionally, part of the top of the head of the 30S subunit. The C-terminal region penetrates the head emerging in the P-site where it contacts tRNA. The chain is Small ribosomal subunit protein uS9 (rpsI) from Thermus thermophilus (strain ATCC BAA-163 / DSM 7039 / HB27).